Consider the following 535-residue polypeptide: High-affinity fructose transporter ght6 (535 aa).

Residues methionine 1–methionine 9 lie on the Cytoplasmic side of the membrane. Residues leucine 10–isoleucine 30 form a helical membrane-spanning segment. At threonine 31–glutamine 58 the chain is on the extracellular side. Residues glycine 59–leucine 79 traverse the membrane as a helical segment. Residues glycine 80–lysine 87 lie on the Cytoplasmic side of the membrane. A helical membrane pass occupies residues cysteine 88–proline 108. Over serine 109–glutamine 112 the chain is Extracellular. A helical membrane pass occupies residues methionine 113–glycine 133. Residues tyrosine 134–arginine 144 are Cytoplasmic-facing. A helical transmembrane segment spans residues glycine 145–isoleucine 165. The Extracellular segment spans residues asparagine 166–arginine 181. The chain crosses the membrane as a helical span at residues valine 182–proline 202. The Cytoplasmic portion of the chain corresponds to glutamate 203 to threonine 268. The chain crosses the membrane as a helical span at residues leucine 269–phenylalanine 287. Residues tyrosine 288–phenylalanine 303 are Extracellular-facing. A helical membrane pass occupies residues leucine 304–leucine 324. Over glutamate 325–arginine 330 the chain is Cytoplasmic. A helical transmembrane segment spans residues glycine 331 to glycine 351. Over aspartate 352–arginine 365 the chain is Extracellular. An N-linked (GlcNAc...) asparagine glycan is attached at asparagine 359. A helical membrane pass occupies residues alanine 366 to alanine 386. Residues proline 387 to alanine 406 lie on the Cytoplasmic side of the membrane. A helical membrane pass occupies residues alanine 407–isoleucine 427. The Extracellular portion of the chain corresponds to serine 428–lysine 434. The chain crosses the membrane as a helical span at residues tyrosine 435–lysine 455. Residues glutamate 456–leucine 535 lie on the Cytoplasmic side of the membrane. Positions aspartate 484 to glutamate 508 are enriched in basic and acidic residues. Positions aspartate 484–leucine 535 are disordered. Residues serine 513–leucine 535 are compositionally biased toward polar residues.

Belongs to the major facilitator superfamily. Sugar transporter (TC 2.A.1.1) family.

The protein resides in the membrane. Functionally, high-affinity fructose transporter. The sequence is that of High-affinity fructose transporter ght6 (ght6) from Schizosaccharomyces pombe (strain 972 / ATCC 24843) (Fission yeast).